The following is an 841-amino-acid chain: Protein translocase subunit SecA (841 aa).

ATP is bound by residues Gln-85, 103-107, and Asp-492; that span reads GEGKT. A disordered region spans residues 788–841; that stretch reads EVVQGQTTAHQPQEGDEEKTVKKKPVRKVVDIGRNSPCHCGSGKKYKNCHGKTE. The Zn(2+) site is built by Cys-825, Cys-827, Cys-836, and His-837. The span at 829–841 shows a compositional bias: basic residues; the sequence is SGKKYKNCHGKTE.

It belongs to the SecA family. In terms of assembly, monomer and homodimer. Part of the essential Sec protein translocation apparatus which comprises SecA, SecYEG and auxiliary proteins SecDF. Other proteins may also be involved. The cofactor is Zn(2+).

It is found in the cell membrane. The protein resides in the cytoplasm. The enzyme catalyses ATP + H2O + cellular proteinSide 1 = ADP + phosphate + cellular proteinSide 2.. In terms of biological role, part of the Sec protein translocase complex. Interacts with the SecYEG preprotein conducting channel. Has a central role in coupling the hydrolysis of ATP to the transfer of proteins into and across the cell membrane, serving as an ATP-driven molecular motor driving the stepwise translocation of polypeptide chains across the membrane. This is Protein translocase subunit SecA from Bacillus pumilus (strain SAFR-032).